The chain runs to 123 residues: MARVKRGVTTRARHKKVIKLAKGYRGRSKNCYRVALQRVEKALQYAYRDRRNRKRFFRSLWIMRINAAVRQYGLLYSDFIYGLSLANITLNRKILADMAVHNKDNFKQIVDLTKEALTKSRVG.

It belongs to the bacterial ribosomal protein bL20 family.

Functionally, binds directly to 23S ribosomal RNA and is necessary for the in vitro assembly process of the 50S ribosomal subunit. It is not involved in the protein synthesizing functions of that subunit. The sequence is that of Large ribosomal subunit protein bL20 from Ehrlichia ruminantium (strain Gardel).